Consider the following 284-residue polypeptide: 4-diphosphocytidyl-2-C-methyl-D-erythritol kinase (284 aa).

The active site involves Lys-14. Position 98–108 (98–108 (PMGGGLGGGSS)) interacts with ATP. The active site involves Asp-140.

The protein belongs to the GHMP kinase family. IspE subfamily.

The enzyme catalyses 4-CDP-2-C-methyl-D-erythritol + ATP = 4-CDP-2-C-methyl-D-erythritol 2-phosphate + ADP + H(+). It functions in the pathway isoprenoid biosynthesis; isopentenyl diphosphate biosynthesis via DXP pathway; isopentenyl diphosphate from 1-deoxy-D-xylulose 5-phosphate: step 3/6. In terms of biological role, catalyzes the phosphorylation of the position 2 hydroxy group of 4-diphosphocytidyl-2C-methyl-D-erythritol. This Shewanella sp. (strain MR-7) protein is 4-diphosphocytidyl-2-C-methyl-D-erythritol kinase.